A 581-amino-acid polypeptide reads, in one-letter code: Proline--tRNA ligase (581 aa).

This sequence belongs to the class-II aminoacyl-tRNA synthetase family. ProS type 1 subfamily. Homodimer.

The protein resides in the cytoplasm. It catalyses the reaction tRNA(Pro) + L-proline + ATP = L-prolyl-tRNA(Pro) + AMP + diphosphate. Catalyzes the attachment of proline to tRNA(Pro) in a two-step reaction: proline is first activated by ATP to form Pro-AMP and then transferred to the acceptor end of tRNA(Pro). As ProRS can inadvertently accommodate and process non-cognate amino acids such as alanine and cysteine, to avoid such errors it has two additional distinct editing activities against alanine. One activity is designated as 'pretransfer' editing and involves the tRNA(Pro)-independent hydrolysis of activated Ala-AMP. The other activity is designated 'posttransfer' editing and involves deacylation of mischarged Ala-tRNA(Pro). The misacylated Cys-tRNA(Pro) is not edited by ProRS. The chain is Proline--tRNA ligase from Delftia acidovorans (strain DSM 14801 / SPH-1).